The following is a 649-amino-acid chain: Transcription factor E2-alpha (649 aa).

5 disordered regions span residues 34-107 (GKGR…SERS), 127-206 (LPGE…SAKT), 222-267 (LHPS…GLQQ), 291-325 (SAAP…SSSG), and 339-382 (DHSS…DGGL). Composition is skewed to polar residues over residues 56 to 76 (SSGS…SRTY) and 85 to 94 (SHNSLPSSTF). Positions 127-143 (LPGELGLSSPGPLSPSG) are enriched in low complexity. Serine 135 and serine 140 each carry phosphoserine. Polar residues predominate over residues 145–156 (KSGSQYYPSYPS). A Nuclear localization signal motif is present at residues 171–177 (SKKVRKV). Low complexity-rich tracts occupy residues 182-193 (PSSVYPSSSGDS) and 242-259 (GDGS…SVGS). Positions 339–352 (DHSSNNFSPSPSTP) are enriched in low complexity. Threonine 351 is modified (phosphothreonine). A Phosphoserine modification is found at serine 355. Arginine 367 carries the omega-N-methylarginine modification. Serine 375 carries the post-translational modification Phosphoserine. The tract at residues 385–420 (LSKMEDRLDEAIHVLRSHAVGTASDLHGLLPGHGAL) is leucine-zipper. Positions 431–547 (GGRHAGLVGG…KAEREKERRV (117 aa)) are disordered. Residues 448 to 469 (TSGTSLLHTHASLPSQASSLPD) are compositionally biased toward polar residues. Residue lysine 494 forms a Glycyl lysine isopeptide (Lys-Gly) (interchain with G-Cter in SUMO2) linkage. At serine 524 the chain carries Phosphoserine. Glutamate 529 is subject to Phosphothreonine. Positions 537 to 547 (QKAEREKERRV) are enriched in basic and acidic residues. Positions 544-597 (ERRVANNARERLRVRDINEAFKELGRMCQLHLSSEKPQTKLLILHQAVAVILSL) constitute a bHLH domain. Residue lysine 620 forms a Glycyl lysine isopeptide (Lys-Gly) (interchain with G-Cter in SUMO2) linkage.

As to quaternary structure, homodimer. Heterodimer; efficient DNA binding requires dimerization with another bHLH protein. Forms a heterodimer with TWIST1 and TWIST2. Forms a heterodimer with NEUROD1; the heterodimer is inhibited in presence of ID2, but not NR0B2, to E-box element. Forms a heterodimer with TCF15; the heterodimer binds E-box element. Forms a heterodimer with MYOG; heterodimerization enhances MYOG DNA-binding and transcriptional activities. Forms a heterodimer with ATOH8; repress transcription of TCF3 and TCF3-NEUROG3 dimer-induced transactivation of E box-dependent promoters. Component of a nuclear TAL-1 complex composed at least of CBFA2T3, LDB1, TAL1 and TCF3. Interacts with NEUROD2. Interacts with EP300. Interacts with PTF1A, TGFB1I1 and UBE2I. Interacts with BHLHA9. Interacts with ASB2; the interaction is mediated by SKP2 and targets TCF3 for Notch-induced proteasomal degradation. Interacts with transcription factor ASCL5/AmeloD. Interacts with RALGAPA1. Interacts with FIGLA. In terms of assembly, forms a heterodimer with ATOH7; required for ATOH7 DNA-binding. Post-translationally, phosphorylated following NGF stimulation. Undergoes Notch-induced ubiquitination and subsequent proteasomal degradation which is mediated by ASB1 or ASB2, the substrate-recognition components of probable ECS E3 ubiquitin-protein ligase complexes.

It is found in the nucleus. Transcriptional regulator. Involved in the initiation of neuronal differentiation and mesenchymal to epithelial transition. Heterodimers between TCF3 and tissue-specific basic helix-loop-helix (bHLH) proteins play major roles in determining tissue-specific cell fate during embryogenesis, like muscle or early B-cell differentiation. Together with TCF15, required for the mesenchymal to epithelial transition. Dimers bind DNA on E-box motifs: 5'-CANNTG-3'. Binds to the kappa-E2 site in the kappa immunoglobulin gene enhancer. Binds to IEB1 and IEB2, which are short DNA sequences in the insulin gene transcription control region. Functionally, facilitates ATOH7 binding to DNA at the consensus sequence 5'-CAGGTG-3', and positively regulates transcriptional activity. In Mesocricetus auratus (Golden hamster), this protein is Transcription factor E2-alpha (TCF3).